A 575-amino-acid chain; its full sequence is Jasmonoyl--L-amino acid synthetase JAR1 (575 aa).

The stretch at 10-30 (MNRVIDEFDEMTRNAHQVQKQ) forms a coiled coil. Ser-98 provides a ligand contact to ATP. Ser-101 contacts jasmonate. ATP-binding positions include Met-118, Thr-121, Gly-163, Asn-168, and 331 to 336 (GSSEGW). Residue 166-170 (TTNVY) coordinates an L-alpha-amino acid. 328-331 (HDYG) contributes to the jasmonate binding site. Residue 530 to 534 (KIQEH) coordinates an L-alpha-amino acid. An ATP-binding site is contributed by Lys-557.

This sequence belongs to the IAA-amido conjugating enzyme family. Interacts with GSTU20/FIP1 under continuous far red (cFR) light; this binding increases its activity and determines the priority of substrate binding.

It is found in the cytoplasm. It carries out the reaction a jasmonate + an L-alpha-amino acid + ATP = a jasmonyl-L-amino acid + AMP + diphosphate + H(+). It catalyses the reaction (+)-7-isojasmonate + L-isoleucine + ATP = L-isoleucine-(+)-7-isojasmonate + AMP + diphosphate + H(+). Activated by GSTU20/FIP1. Catalyzes the synthesis of jasmonates-amino acid conjugates by adenylation; can use Ile and, in vitro at least, Val, Leu and Phe as conjugating amino acids on jasmonic acid (JA) and 9,10-dihydro-JA substrates, and to a lower extent, on 3-oxo-2-(2Z-pentenyl)-cyclopentane-1-butyric acid (OPC-4) and 12-hydroxy-JA (12-OH-JA). Can synthesize adenosine 5-tetraphosphate in vitro. Required for the JA-mediated signaling pathway that regulates many developmental and defense mechanisms, including growth root inhibition, vegetative storage proteins (VSPs) accumulation, induced systemic resistance (ISR), response to wounding and herbivores, tolerance to ozone O(3) (probably having a role in lesion containment). Plays an important role in the accumulation of JA-Ile in response to wounding, both locally and systemically; promotes JA responding genes especially in distal part of wounded plants, via the JA-Ile-stimulated degradation of JAZ repressor proteins by the SCF(COI)E3 ubiquitin-protein ligase pathway. Involved in the apoptosis-like programmed cell death (PCD) induced by fungal toxin fumonisin B1-mediated (FB1). Required for volatile compounds (C6-aldehydes and allo-ocimene)-mediated defense activation. Involved in the non-pathogenic rhizobacterium-mediated ISR (defense priming) by P.fluorescens (strains CHAOr and WCS417r) and P.putida LSW17S against infection leaf pathogens such as P.syringae pv. tomato and H.parasitica. Required for the JA-dependent resistance to fungi such as P.irregulare, U.vignae and U.appendiculatus. Necessary to induce systemic resistance against R.solanaceraum and P.syringae pv. tomato with P.oligandrum (a non-pathogenic biocontrol agent) cell wall protein fraction (CWP). Mediates PGIP2 accumulation in response to B.cinerea infection and thus contributes to resistance against this pathogen. Modulates the UV-B alteration of leaves attractiveness to diamondback moths P.xylostella leading to insect oviposition. Involved in the regulation of far-red light influence on development, being an actor of the interplay between light and JA signaling. Seems necessary for the salicylic acid (SA)-mediated, NPR1-independent resistance pathway. May contribute to the chitin-elicited pathway. Contributes to the sensitivity toward F.graminearum. The chain is Jasmonoyl--L-amino acid synthetase JAR1 from Arabidopsis thaliana (Mouse-ear cress).